The sequence spans 132 residues: D-ribose pyranase (132 aa).

His-20 serves as the catalytic Proton donor. Residues Asp-28, His-99, and 121–123 each bind substrate; that span reads YSN.

It belongs to the RbsD / FucU family. RbsD subfamily. In terms of assembly, homodecamer.

It localises to the cytoplasm. The catalysed reaction is beta-D-ribopyranose = beta-D-ribofuranose. It participates in carbohydrate metabolism; D-ribose degradation; D-ribose 5-phosphate from beta-D-ribopyranose: step 1/2. Its function is as follows. Catalyzes the interconversion of beta-pyran and beta-furan forms of D-ribose. The protein is D-ribose pyranase of Pseudomonas putida (strain W619).